The sequence spans 487 residues: Glutamyl-tRNA(Gln) amidotransferase subunit A (487 aa).

Active-site charge relay system residues include lysine 75 and serine 150. Residue serine 174 is the Acyl-ester intermediate of the active site.

Belongs to the amidase family. GatA subfamily. In terms of assembly, heterotrimer of A, B and C subunits.

The enzyme catalyses L-glutamyl-tRNA(Gln) + L-glutamine + ATP + H2O = L-glutaminyl-tRNA(Gln) + L-glutamate + ADP + phosphate + H(+). In terms of biological role, allows the formation of correctly charged Gln-tRNA(Gln) through the transamidation of misacylated Glu-tRNA(Gln) in organisms which lack glutaminyl-tRNA synthetase. The reaction takes place in the presence of glutamine and ATP through an activated gamma-phospho-Glu-tRNA(Gln). This is Glutamyl-tRNA(Gln) amidotransferase subunit A from Deinococcus deserti (strain DSM 17065 / CIP 109153 / LMG 22923 / VCD115).